Consider the following 472-residue polypeptide: ATP synthase subunit beta (472 aa).

150-157 (GGAGVGKT) lines the ATP pocket.

This sequence belongs to the ATPase alpha/beta chains family. F-type ATPases have 2 components, CF(1) - the catalytic core - and CF(0) - the membrane proton channel. CF(1) has five subunits: alpha(3), beta(3), gamma(1), delta(1), epsilon(1). CF(0) has four main subunits: a, b, b' and c.

It is found in the cellular chromatophore membrane. The enzyme catalyses ATP + H2O + 4 H(+)(in) = ADP + phosphate + 5 H(+)(out). Produces ATP from ADP in the presence of a proton gradient across the membrane. The catalytic sites are hosted primarily by the beta subunits. The protein is ATP synthase subunit beta of Rhodobacter capsulatus (Rhodopseudomonas capsulata).